Here is a 656-residue protein sequence, read N- to C-terminus: UvrABC system protein B (656 aa).

Residues 29 to 414 (KLSEFKTKQQ…SLSQNNVIEQ (386 aa)) enclose the Helicase ATP-binding domain. An ATP-binding site is contributed by 42-49 (GATGTGKT). The Beta-hairpin motif lies at 95–118 (YFDFYQPEAYLPSKGIYIEKSATV). The Helicase C-terminal domain maps to 434-596 (QVEDLIEEII…KTPKTVVKPL (163 aa)). The UVR domain maps to 614-649 (AALIKQLTKEMKKAAANQNYELAIEIRDSIFELEKE).

This sequence belongs to the UvrB family. Forms a heterotetramer with UvrA during the search for lesions. Interacts with UvrC in an incision complex.

The protein localises to the cytoplasm. Its function is as follows. The UvrABC repair system catalyzes the recognition and processing of DNA lesions. A damage recognition complex composed of 2 UvrA and 2 UvrB subunits scans DNA for abnormalities. Upon binding of the UvrA(2)B(2) complex to a putative damaged site, the DNA wraps around one UvrB monomer. DNA wrap is dependent on ATP binding by UvrB and probably causes local melting of the DNA helix, facilitating insertion of UvrB beta-hairpin between the DNA strands. Then UvrB probes one DNA strand for the presence of a lesion. If a lesion is found the UvrA subunits dissociate and the UvrB-DNA preincision complex is formed. This complex is subsequently bound by UvrC and the second UvrB is released. If no lesion is found, the DNA wraps around the other UvrB subunit that will check the other stand for damage. This is UvrABC system protein B from Mycoplasma genitalium (strain ATCC 33530 / DSM 19775 / NCTC 10195 / G37) (Mycoplasmoides genitalium).